A 434-amino-acid chain; its full sequence is ATP-dependent protease ATPase subunit HslU (434 aa).

ATP contacts are provided by residues Val18, 60–65 (GVGKTE), Asp247, Glu312, and Arg384.

The protein belongs to the ClpX chaperone family. HslU subfamily. As to quaternary structure, a double ring-shaped homohexamer of HslV is capped on each side by a ring-shaped HslU homohexamer. The assembly of the HslU/HslV complex is dependent on binding of ATP.

It localises to the cytoplasm. ATPase subunit of a proteasome-like degradation complex; this subunit has chaperone activity. The binding of ATP and its subsequent hydrolysis by HslU are essential for unfolding of protein substrates subsequently hydrolyzed by HslV. HslU recognizes the N-terminal part of its protein substrates and unfolds these before they are guided to HslV for hydrolysis. The polypeptide is ATP-dependent protease ATPase subunit HslU (Hyphomonas neptunium (strain ATCC 15444)).